The chain runs to 175 residues: uncharacterized protein (175 aa).

Residues glutamine 71–alanine 166 form a DNL-type zinc finger. 4 residues coordinate Zn(2+): cysteine 82, cysteine 85, cysteine 107, and cysteine 110.

This is an uncharacterized protein from Schizosaccharomyces pombe (strain 972 / ATCC 24843) (Fission yeast).